A 358-amino-acid chain; its full sequence is Sesquiterpene synthase Agr3 (358 aa).

Mg(2+)-binding residues include D99, N246, S250, and E254. Positions 99 to 103 (DNISD) match the DDXXD motif motif. (2E,6E)-farnesyl diphosphate is bound by residues R334 and Y335.

The protein belongs to the terpene synthase family. Requires Mg(2+) as cofactor.

The enzyme catalyses (2E,6E)-farnesyl diphosphate = alpha-muurolene + diphosphate. The catalysed reaction is (2E,6E)-farnesyl diphosphate = gamma-muurolene + diphosphate. It carries out the reaction (2E,6E)-farnesyl diphosphate = delta-cadinene + diphosphate. Its function is as follows. Terpene cyclase that catalyzes the cyclization of farnesyl diphosphate (FPP) to various sesquiterpenes, including alpha-muurolene, gamma-muurolene, germacrene, delta-cadinene, delta-cadinol and cubenol. This chain is Sesquiterpene synthase Agr3, found in Cyclocybe aegerita (Black poplar mushroom).